The following is a 393-amino-acid chain: Ubiquitin-like modifier-activating enzyme 5 (393 aa).

5 residues coordinate ATP: Gly-75, Asp-96, Lys-119, Asn-142, and Asn-175. Zn(2+) contacts are provided by Cys-217 and Cys-220. Residue Cys-241 is the Glycyl thioester intermediate of the active site. Zn(2+) contacts are provided by Cys-294 and Cys-299.

Belongs to the ubiquitin-activating E1 family. UBA5 subfamily.

Functionally, E1-like enzyme which activates UFM1. The sequence is that of Ubiquitin-like modifier-activating enzyme 5 from Bombyx mori (Silk moth).